The primary structure comprises 160 residues: UPF0479 membrane protein YER190C-B (160 aa).

Transmembrane regions (helical) follow at residues 39-59 and 136-156; these read IVFC…KVLQ and VPMI…ISQH.

This sequence belongs to the UPF0479 family.

The protein resides in the membrane. The protein is UPF0479 membrane protein YER190C-B of Saccharomyces cerevisiae (strain ATCC 204508 / S288c) (Baker's yeast).